We begin with the raw amino-acid sequence, 241 residues long: Major prion protein (241 aa).

The signal sequence occupies residues 1-15 (MLVLFVATWSDLGLC). Positions 16-31 (KKRPKPGGWNTGGSRY) are interaction with ADGRG6. The segment at 16–223 (KKRPKPGGWN…ESQAYYQRGS (208 aa)) is interaction with GRB2, ERI3 and SYN1. The tract at residues 18-100 (RPKPGGWNTG…QWNKPSKPKT (83 aa)) is disordered. 5 repeat units span residues 44-52 (PQGGGSWGQ), 53-60 (PHGGGWGQ), 61-68 (PHGGGWGQ), 69-76 (PHGGGWGQ), and 77-84 (PHGGGWGQ). Residues 44–84 (PQGGGSWGQPHGGGWGQPHGGGWGQPHGGGWGQPHGGGWGQ) form a 5 X 8 AA tandem repeats of P-H-G-G-G-W-G-Q region. A compositionally biased stretch (gly residues) spans 45–88 (QGGGSWGQPHGGGWGQPHGGGWGQPHGGGWGQPHGGGWGQGGGT). Residues histidine 54, glycine 55, glycine 56, histidine 62, glycine 63, glycine 64, histidine 70, glycine 71, glycine 72, histidine 78, glycine 79, and glycine 80 each coordinate Cu(2+). Cysteines 172 and 207 form a disulfide. Asparagine 174 and asparagine 190 each carry an N-linked (GlcNAc...) asparagine glycan. A lipid anchor (GPI-anchor amidated serine) is attached at serine 223. Residues 224–241 (SMVLFSSPPVILLISFLI) constitute a propeptide, removed in mature form.

Belongs to the prion family. Monomer and homodimer. Has a tendency to aggregate into amyloid fibrils containing a cross-beta spine, formed by a steric zipper of superposed beta-strands. Soluble oligomers may represent an intermediate stage on the path to fibril formation. Copper binding may promote oligomerization. Interacts with GRB2, APP, ERI3/PRNPIP and SYN1. Mislocalized cytosolically exposed PrP interacts with MGRN1; this interaction alters MGRN1 subcellular location and causes lysosomal enlargement. Interacts with APP. Interacts with KIAA1191. Interacts with ADGRG6.

It localises to the cell membrane. It is found in the golgi apparatus. Its function is as follows. Its primary physiological function is unclear. May play a role in neuronal development and synaptic plasticity. May be required for neuronal myelin sheath maintenance. May promote myelin homeostasis through acting as an agonist for ADGRG6 receptor. May play a role in iron uptake and iron homeostasis. Soluble oligomers are toxic to cultured neuroblastoma cells and induce apoptosis (in vitro). Association with GPC1 (via its heparan sulfate chains) targets PRNP to lipid rafts. Also provides Cu(2+) or Zn(2+) for the ascorbate-mediated GPC1 deaminase degradation of its heparan sulfate side chains. This is Major prion protein (PRNP) from Plecturocebus moloch (Dusky titi monkey).